The chain runs to 61 residues: UPF0434 protein PSPPH_1629 (61 aa).

The protein belongs to the UPF0434 family.

In Pseudomonas savastanoi pv. phaseolicola (strain 1448A / Race 6) (Pseudomonas syringae pv. phaseolicola (strain 1448A / Race 6)), this protein is UPF0434 protein PSPPH_1629.